A 343-amino-acid chain; its full sequence is MSNIDKEKAVAAALAQIEKSYGKGSVMKLGQRPNVDIESVSTGSLGLDIALGIGGIPKGRIIEIFGPESSGKTTLTLHLIAEAQKKGGTCAFIDAEHALDPAYAKKLGVNIDELIISQPDTGEQALEIADTLIRSGGIDMIIIDSVAALVPKSEIEGEMGDAQMASQARLMSQALRKLTASINRTNCITVFINQIRMKIGVMFGSPETTTGGNALKFYASVRIDIRRIGSIKDKEEVIGSQTKVKVVKNKVSPPFKTADFDIMYGSGISKEGEIIDLGVKLDIIEKSGSWFSYNSVRIGQGRENVKQYLKDNPKISNEIEKLVREKSSKVTNINFEQEEEVND.

Residue 66-73 participates in ATP binding; it reads GPESSGKT.

It belongs to the RecA family.

The protein resides in the cytoplasm. Can catalyze the hydrolysis of ATP in the presence of single-stranded DNA, the ATP-dependent uptake of single-stranded DNA by duplex DNA, and the ATP-dependent hybridization of homologous single-stranded DNAs. It interacts with LexA causing its activation and leading to its autocatalytic cleavage. This chain is Protein RecA, found in Rickettsia bellii (strain RML369-C).